The primary structure comprises 383 residues: Ribosomal RNA large subunit methyltransferase G (383 aa).

It belongs to the methyltransferase superfamily. RlmG family.

The protein localises to the cytoplasm. The enzyme catalyses guanosine(1835) in 23S rRNA + S-adenosyl-L-methionine = N(2)-methylguanosine(1835) in 23S rRNA + S-adenosyl-L-homocysteine + H(+). Specifically methylates the guanine in position 1835 (m2G1835) of 23S rRNA. The sequence is that of Ribosomal RNA large subunit methyltransferase G from Vibrio atlanticus (strain LGP32) (Vibrio splendidus (strain Mel32)).